The chain runs to 130 residues: UPF0102 protein Cthe_0758 (130 aa).

It belongs to the UPF0102 family.

The sequence is that of UPF0102 protein Cthe_0758 from Acetivibrio thermocellus (strain ATCC 27405 / DSM 1237 / JCM 9322 / NBRC 103400 / NCIMB 10682 / NRRL B-4536 / VPI 7372) (Clostridium thermocellum).